The primary structure comprises 643 residues: Phosphatidylinositol-3,5-bisphosphate 3-phosphatase MTMR2 (643 aa).

Composition is skewed to polar residues over residues 1–12 (MEKSSSCESLGS) and 23–40 (DSLS…VHTK). The segment at 1–56 (MEKSSSCESLGSQPAAARPPSVDSLSSASTSHSENSVHTKSASVVSSDSISTSADN) is disordered. A phosphoserine mark is found at Ser-6 and Ser-9. A compositionally biased stretch (low complexity) spans 41-55 (SASVVSSDSISTSAD). Ser-58 is modified (phosphoserine). The GRAM domain occupies 68 to 139 (NKLAEMEEPP…GVINRVEKIG (72 aa)). The Myotubularin phosphatase domain occupies 205–580 (GWKLYDPLLE…RHLELWVGYY (376 aa)). Residues Asn-330, Asn-355, and Ile-356 each coordinate a 1,2-diacyl-sn-glycero-3-phospho-(1D-myo-inositol-3,5-bisphosphate). Asn-330, Asn-355, and Ile-356 together coordinate a 1,2-diacyl-sn-glycero-3-phospho-(1D-myo-inositol-3-phosphate). Residue Cys-417 is the Phosphocysteine intermediate of the active site. Positions 418, 419, 420, 421, 422, 423, 459, and 463 each coordinate a 1,2-diacyl-sn-glycero-3-phospho-(1D-myo-inositol-3,5-bisphosphate). A 1,2-diacyl-sn-glycero-3-phospho-(1D-myo-inositol-3-phosphate)-binding residues include Ser-418, Asp-419, Gly-420, Trp-421, Asp-422, and Arg-423. Arg-463 serves as a coordination point for a 1,2-diacyl-sn-glycero-3-phospho-(1D-myo-inositol-3-phosphate). Residues 593 to 627 (IHNRYKELLAKRAELQKKVEELQREISNRSTSSSE) are a coiled coil. Residues 615-643 (QREISNRSTSSSERASSPAQCVTPVQTVV) are disordered. Over residues 620–631 (NRSTSSSERASS) the composition is skewed to low complexity. Residues 632 to 643 (PAQCVTPVQTVV) show a composition bias toward polar residues.

Belongs to the protein-tyrosine phosphatase family. Non-receptor class myotubularin subfamily. In terms of assembly, homodimer (via coiled-coil domain). Heterotetramer consisting of one MTMR2 dimer and one SBF2/MTMR13 dimer; specifically in peripheral nerves stabilizes SBF2/MTMR13 at the membranes and increases MTMR2 catalytic activity towards phosphatidylinositol 3,5-bisphosphate and to a lesser extent towards phosphatidylinositol 3-phosphate. Heterodimer with SBF1/MTMR5; acts as an adapter for the phosphatase MTMR2 to regulate MTMR2 catalytic activity and subcellular location. Heterodimer with MTMR12. Post-translationally, phosphorylation at Ser-58 decreases MTMR2 localization to endocytic vesicular structures.

It localises to the cytoplasm. Its subcellular location is the early endosome membrane. The protein localises to the perinuclear region. The protein resides in the cell projection. It is found in the axon. It localises to the endosome membrane. It carries out the reaction a 1,2-diacyl-sn-glycero-3-phospho-(1D-myo-inositol-3,5-bisphosphate) + H2O = a 1,2-diacyl-sn-glycero-3-phospho-(1D-myo-inositol-5-phosphate) + phosphate. The catalysed reaction is a 1,2-diacyl-sn-glycero-3-phospho-(1D-myo-inositol-3-phosphate) + H2O = a 1,2-diacyl-sn-glycero-3-phospho-(1D-myo-inositol) + phosphate. The enzyme catalyses 1,2-dioctanoyl-sn-glycero-3-phospho-(1-D-myo-inositol-3-phosphate) + H2O = 1,2-dioctanoyl-sn-glycero-3-phospho-(1D-myo-inositol) + phosphate. It catalyses the reaction 1,2-dioctanoyl-sn-glycero-3-phospho-(1D-myo-inositol-3,5-bisphosphate) + H2O = 1,2-dioctanoyl-sn-glycero-3-phospho-(1D-myo-inositol-5-phosphate) + phosphate. Functionally, lipid phosphatase that specifically dephosphorylates the D-3 position of phosphatidylinositol 3-phosphate and phosphatidylinositol 3,5-bisphosphate, generating phosphatidylinositol and phosphatidylinositol 5-phosphate. Regulates the level of these phosphoinositides critical for various biological processes including autophagy initiation and autophagosome maturation. The chain is Phosphatidylinositol-3,5-bisphosphate 3-phosphatase MTMR2 from Homo sapiens (Human).